A 216-amino-acid chain; its full sequence is ATP phosphoribosyltransferase (216 aa).

The protein belongs to the ATP phosphoribosyltransferase family. Short subfamily. Heteromultimer composed of HisG and HisZ subunits.

It localises to the cytoplasm. The catalysed reaction is 1-(5-phospho-beta-D-ribosyl)-ATP + diphosphate = 5-phospho-alpha-D-ribose 1-diphosphate + ATP. The protein operates within amino-acid biosynthesis; L-histidine biosynthesis; L-histidine from 5-phospho-alpha-D-ribose 1-diphosphate: step 1/9. Its function is as follows. Catalyzes the condensation of ATP and 5-phosphoribose 1-diphosphate to form N'-(5'-phosphoribosyl)-ATP (PR-ATP). Has a crucial role in the pathway because the rate of histidine biosynthesis seems to be controlled primarily by regulation of HisG enzymatic activity. The chain is ATP phosphoribosyltransferase from Streptococcus thermophilus (strain ATCC BAA-491 / LMD-9).